We begin with the raw amino-acid sequence, 701 residues long: Polyribonucleotide nucleotidyltransferase (701 aa).

The Mg(2+) site is built by Asp485 and Asp491. Positions 552 to 611 constitute a KH domain; that stretch reads PRITTLKINPEKIRDVIGKGGATIRALTEETGTTIELEDDGTVKIASSNGEATKEAIRRI. The region spanning 621–689 is the S1 motif domain; it reads GTVYNGKVVR…RQGRVRLSMK (69 aa).

It belongs to the polyribonucleotide nucleotidyltransferase family. As to quaternary structure, component of the RNA degradosome, which is a multiprotein complex involved in RNA processing and mRNA degradation. The cofactor is Mg(2+).

Its subcellular location is the cytoplasm. It carries out the reaction RNA(n+1) + phosphate = RNA(n) + a ribonucleoside 5'-diphosphate. Its function is as follows. Involved in mRNA degradation. Catalyzes the phosphorolysis of single-stranded polyribonucleotides processively in the 3'- to 5'-direction. The protein is Polyribonucleotide nucleotidyltransferase of Shewanella piezotolerans (strain WP3 / JCM 13877).